The chain runs to 227 residues: 2-heptyl-1-hydroxyquinolin-4(1H)-one methyltransferase (227 aa).

This sequence belongs to the methyltransferase superfamily. In terms of assembly, monomer.

It is found in the cytoplasm. The enzyme catalyses 2-heptyl-1-hydroxy-4(1H)-quinolinone + S-adenosyl-L-methionine = 2-heptyl-1-methoxy-4(1H)-quinolinone + S-adenosyl-L-homocysteine + H(+). It carries out the reaction 3-bromo-2-heptyl-1-hydroxy-4(1H)-quinolinone + S-adenosyl-L-methionine = 3-bromo-2-heptyl-1-methoxy-4(1H)-quinolinone + S-adenosyl-L-homocysteine + H(+). Its function is as follows. Involved in cellular response to chemical stress and may contribute to resistance toward antimicrobial natural compounds as well as drugs. Catalyzes the methylation and detoxification of the P.aeruginosa toxin 2-heptyl-1-hydroxy-4(1H)-quinolinone (HQNO) to 2-heptyl-1-methoxy-4(1H)-quinolinone (HMOQ). Can also methylate 3-bromo-2-heptyl-1-hydroxy-4(1H)-quinolinone, and shows much lower activity with 1-hydroxyquinolin-4(1H)-one, quercetin, 4-hydroxyquinolin-2(1H)-one (DHQ) and 4-hydroxyisoquinolin-1(2H)-one. This Mycobacteroides abscessus (strain ATCC 19977 / DSM 44196 / CCUG 20993 / CIP 104536 / JCM 13569 / NCTC 13031 / TMC 1543 / L948) (Mycobacterium abscessus) protein is 2-heptyl-1-hydroxyquinolin-4(1H)-one methyltransferase.